The sequence spans 469 residues: 3-isopropylmalate dehydratase large subunit (469 aa).

[4Fe-4S] cluster is bound by residues C346, C406, and C409.

It belongs to the aconitase/IPM isomerase family. LeuC type 1 subfamily. Heterodimer of LeuC and LeuD. The cofactor is [4Fe-4S] cluster.

The enzyme catalyses (2R,3S)-3-isopropylmalate = (2S)-2-isopropylmalate. It functions in the pathway amino-acid biosynthesis; L-leucine biosynthesis; L-leucine from 3-methyl-2-oxobutanoate: step 2/4. Catalyzes the isomerization between 2-isopropylmalate and 3-isopropylmalate, via the formation of 2-isopropylmaleate. The chain is 3-isopropylmalate dehydratase large subunit from Lysinibacillus sphaericus (strain C3-41).